The primary structure comprises 494 residues: Alpha-amylase A (494 aa).

The first 18 residues, 1–18 (MFLAKSIVCLALLAVANA), serve as a signal peptide directing secretion. Pyrrolidone carboxylic acid is present on Q19. An intrachain disulfide couples C46 to C102. N116, R165, and D174 together coordinate Ca(2+). The cysteines at positions 153 and 167 are disulfide-linked. R202 serves as a coordination point for chloride. D204 acts as the Nucleophile in catalysis. H208 is a binding site for Ca(2+). E241 acts as the Proton donor in catalysis. Residues N304 and R343 each contribute to the chloride site. Cystine bridges form between C376-C382 and C448-C460.

The protein belongs to the glycosyl hydrolase 13 family. As to quaternary structure, monomer. Requires Ca(2+) as cofactor. It depends on chloride as a cofactor.

The enzyme catalyses Endohydrolysis of (1-&gt;4)-alpha-D-glucosidic linkages in polysaccharides containing three or more (1-&gt;4)-alpha-linked D-glucose units.. The protein is Alpha-amylase A (Amy-p) of Drosophila melanogaster (Fruit fly).